The primary structure comprises 609 residues: Replication protein A 70 kDa DNA-binding subunit (609 aa).

Residues 113–163 (GNPQPYNDGQPQPAAPAPASAPAPAPSKLQNNSAPPPSMNRGTSKLFGGGS) form a disordered region. Over residues 125–137 (PAAPAPASAPAPA) the composition is skewed to pro residues. Positions 188 to 272 (WTVRARVTNK…VKNDYEMTFN (85 aa)) form a DNA-binding region, OB. A C4-type zinc finger spans residues 472–494 (CPSQDCNKKVIDQQNGLFRCEKC).

The protein belongs to the replication factor A protein 1 family. In terms of assembly, component of the heterotrimeric canonical replication protein A complex (RPA). Interacts with rpain-a.

It is found in the nucleus. The protein localises to the PML body. In terms of biological role, as part of the heterotrimeric replication protein A complex (RPA/RP-A), binds and stabilizes single-stranded DNA intermediates, that form during DNA replication or upon DNA stress. It prevents their reannealing and in parallel, recruits and activates different proteins and complexes involved in DNA metabolism. Thereby, it plays an essential role both in DNA replication and the cellular response to DNA damage. The polypeptide is Replication protein A 70 kDa DNA-binding subunit (rpa1) (Xenopus laevis (African clawed frog)).